The chain runs to 428 residues: Cysteine synthase 2 (428 aa).

Residues 7 to 27 traverse the membrane as a helical segment; the sequence is IYIGSAFVAGVVLTIAFKDLF. The residue at position 106 (Lys-106) is an N6-(pyridoxal phosphate)lysine. Pyridoxal 5'-phosphate-binding positions include 260 to 264 and Ser-367; that span reads GTGGT.

This sequence belongs to the cysteine synthase/cystathionine beta-synthase family. Pyridoxal 5'-phosphate is required as a cofactor.

The protein localises to the mitochondrion outer membrane. The catalysed reaction is O-acetyl-L-serine + hydrogen sulfide = L-cysteine + acetate. In terms of biological role, putative cysteine synthase that catalyzes the conversion of O-acetyl-L-serine (OAS) into cysteine, the last step in the cysteine biosynthesis pathway. However, in contrast to cysteine synthase cysB, this CS-like protein seems not to function in cysteine biosynthesis. This chain is Cysteine synthase 2, found in Emericella nidulans (strain FGSC A4 / ATCC 38163 / CBS 112.46 / NRRL 194 / M139) (Aspergillus nidulans).